The chain runs to 674 residues: MAPGQAPHQATPWRDAHPFFLLSPVMGLLSRAWSRLRGLGPLEPWLVEAVKGAALVEAGLEGEARTPLAIPHTPWGRRPEEEAEDSGGPGEDRETLGLKTSSSLPEAWGLLDDDDGMYGEREATSVPRGQGSQFADGQRAPLSPSLLIRTLQGSDKNPGEEKAEEEGVAEEEGVNKFSYPPSHRECCPAVEEEDDEEAVKKEAHRTSTSALSPGSKPSTWVSCPGEEENQATEDKRTERSKGARKTSVSPRSSGSDPRSWEYRSGEASEEKEEKAHKETGKGEAAPGPQSSAPAQRPQLKSWWCQPSDEEEGEVKALGAAEKDGEAECPPCIPPPSAFLKAWVYWPGEDTEEEEDEEEDEDSDSGSDEEEGEAEASSSTPATGVFLKSWVYQPGEDTEEEEDEDSDTGSAEDEREAETSASTPPASAFLKAWVYRPGEDTEEEEDEDVDSEDKEDDSEAALGEAESDPHPSHPDQRAHFRGWGYRPGKETEEEEAAEDWGEAEPCPFRVAIYVPGEKPPPPWAPPRLPLRLQRRLKRPETPTHDPDPETPLKARKVRFSEKVTVHFLAVWAGPAQAARQGPWEQLARDRSRFARRITQAQEELSPCLTPAARARAWARLRNPPLAPIPALTQTLPSSSVPSSPVQTTPLSQAVATPSRSSAAAAAALDLSGRRG.

The Cytoplasmic segment spans residues 1–21 (MAPGQAPHQATPWRDAHPFFL). Residues 1–60 (MAPGQAPHQATPWRDAHPFFLLSPVMGLLSRAWSRLRGLGPLEPWLVEAVKGAALVEAGL) form a required for localization in the endoplasmic reticulum region. Positions 22–39 (LSPVMGLLSRAWSRLRGL) form an intramembrane region, helical. Residues 40–674 (GPLEPWLVEA…AALDLSGRRG (635 aa)) lie on the Cytoplasmic side of the membrane. The interval 65-504 (RTPLAIPHTP…AAEDWGEAEP (440 aa)) is disordered. At Ser-143 the chain carries Phosphoserine. Over residues 162–172 (KAEEEGVAEEE) the composition is skewed to acidic residues. The segment covering 206–221 (TSTSALSPGSKPSTWV) has biased composition (polar residues). Over residues 232–241 (TEDKRTERSK) the composition is skewed to basic and acidic residues. The span at 246–256 (TSVSPRSSGSD) shows a compositional bias: polar residues. The segment covering 258–281 (RSWEYRSGEASEEKEEKAHKETGK) has biased composition (basic and acidic residues). Tyr-262 carries the phosphotyrosine modification. The span at 282–298 (GEAAPGPQSSAPAQRPQ) shows a compositional bias: low complexity. 4 consecutive repeat copies span residues 337–369 (AFLKAWVYWPGEDTEEEEDEEEDEDSDSGSDEE), 384–417 (VFLKSWVYQPGEDTEEEEDEDSDTGSAEDEREAE), 427–460 (AFLKAWVYRPGEDTEEEEDEDVDSEDKEDDSEAA), and 477–510 (AHFRGWGYRPGKETEEEEAAEDWGEAEPCPFRVA). A 4 X 34 AA approximate repeats region spans residues 337–510 (AFLKAWVYWP…EAEPCPFRVA (174 aa)). The interaction with SMAD7 stretch occupies residues 337-510 (AFLKAWVYWP…EAEPCPFRVA (174 aa)). A compositionally biased stretch (acidic residues) spans 348–373 (EDTEEEEDEEEDEDSDSGSDEEEGEA). The residue at position 391 (Tyr-391) is a Phosphotyrosine. A compositionally biased stretch (acidic residues) spans 395 to 415 (EDTEEEEDEDSDTGSAEDERE). Low complexity predominate over residues 418–427 (TSASTPPASA). Tyr-434 is subject to Phosphotyrosine. Residues 439–458 (DTEEEEDEDVDSEDKEDDSE) are compositionally biased toward acidic residues. Over residues 466–477 (SDPHPSHPDQRA) the composition is skewed to basic and acidic residues. The tract at residues 483–555 (GYRPGKETEE…DPETPLKARK (73 aa)) is interaction with KMT2A/MLL1. The span at 490-501 (TEEEEAAEDWGE) shows a compositional bias: acidic residues. Residue Tyr-512 is modified to Phosphotyrosine. Disordered regions lie at residues 534-554 (RLKRPETPTHDPDPETPLKAR) and 625-674 (APIP…GRRG). The segment at 536-583 (KRPETPTHDPDPETPLKARKVRFSEKVTVHFLAVWAGPAQAARQGPWE) is interaction with SMARCB1. A compositionally biased stretch (basic and acidic residues) spans 537 to 554 (RPETPTHDPDPETPLKAR). Residues 630-666 (LTQTLPSSSVPSSPVQTTPLSQAVATPSRSSAAAAAA) are compositionally biased toward low complexity.

This sequence belongs to the PPP1R15 family. As to quaternary structure, interacts with PPP1CA. Interacts with EIF2S1. Interacts with PCNA. Interacts with LYN and KMT2A/MLL1. Interacts with PPP1R1A and SMARCB1. Interacts with SMAD7. Interacts with BAG1. Interacts with NOX4. (Microbial infection) Interacts with enterovirus 71/EV71 non-structural protein precursor 3CD; this interaction promotes EV71 replication. Post-translationally, phosphorylated at multiple Ser/Thr residues. Phosphorylated on tyrosine by LYN; which impairs its antiproliferative activity. Phosphorylation at Tyr-262 enhances proteasomal degradation, this position is dephosphorylated by PTPN2. In terms of processing, polyubiquitinated. Exhibits a rapid proteasomal degradation with a half-life under 1 hour, ubiquitination depends on endoplasmic reticulum association.

It localises to the endoplasmic reticulum membrane. It is found in the mitochondrion outer membrane. In terms of biological role, recruits the serine/threonine-protein phosphatase PPP1CA to prevents excessive phosphorylation of the translation initiation factor eIF-2A/EIF2S1, thereby reversing the shut-off of protein synthesis initiated by stress-inducible kinases and facilitating recovery of cells from stress. Down-regulates the TGF-beta signaling pathway by promoting dephosphorylation of TGFB1 by PP1. May promote apoptosis by inducing p53/TP53 phosphorylation on 'Ser-15'. Plays an essential role in autophagy by tuning translation during starvation, thus enabling lysosomal biogenesis and a sustained autophagic flux. Also acts a viral restriction factor by attenuating HIV-1 replication. Mechanistically, mediates the inhibition of HIV-1 TAR RNA-mediated translation. Its function is as follows. (Microbial infection) Promotes enterovirus 71 replication by mediating the internal ribosome entry site (IRES) activity of viral 5'-UTR. The chain is Protein phosphatase 1 regulatory subunit 15A (PPP1R15A) from Homo sapiens (Human).